The chain runs to 479 residues: Acyltransferase easC (479 aa).

The Proton acceptor role is filled by H161.

The protein belongs to the plant acyltransferase family. In terms of assembly, monomer.

It participates in antibiotic biosynthesis. Its function is as follows. Acyltransferase; part of the gene cluster that mediates the biosynthesis of emericellamides, secondary metabolites acting as antibiotics. The biosynthesis of emericellamides initiates from the highly reducing polyketide synthase easB which catalyzes the formation of the linear polyketide chain. EasB produces several polyketides that can be further processed by the downstream enzymes. The polyketides are released from easB as linear polyketide carboxylic acids, which are converted to CoA thioesters by the acyl-CoA ligase easD. The substrates are then loaded onto the acyltransferase easC, which shuttles them to the first thiolation (T) domain of the nonribosomal peptide synthetase easA. EasA then performs condensation of the polyketides with one glycine, two alanine, one valine and one leucine residues. A last step of cyclization leads to the production of emericellamides. The sequence is that of Acyltransferase easC from Emericella nidulans (strain FGSC A4 / ATCC 38163 / CBS 112.46 / NRRL 194 / M139) (Aspergillus nidulans).